Consider the following 610-residue polypeptide: Menin (610 aa).

Residues glycine 214 to proline 390 form an interaction with FANCD2 region. Residues arginine 460–threonine 552 are disordered. Over residues arginine 484–leucine 500 the composition is skewed to basic and acidic residues. Phosphoserine is present on residues serine 487 and serine 543. Residue threonine 594 is modified to Phosphothreonine.

Component of the MLL-HCF complex, at least composed of KMT2A/MLL1, MEN1, ASH2L, RBBP5, DPY30, WDR5, HCFC1 and HCFC2. Component of the menin-associated histone methyltransferase complex, at least composed of KMT2B/MLL4, MEN1, ASH2L, RBBP5, DPY30 and WDR5. Interacts with POLR2B. Interacts with POLR2A phosphorylated at 'Ser-5', but not with the unphosphorylated, nor 'Ser-2' phosphorylated POLR2A forms. Interacts with FANCD2 and DBF4. Interacts with SMAD3, but not with SMAD2, nor SMAD4. Directly interacts with NFKB1, NFKB2 and RELA. Interacts with JUND (via MBM motif); inhibits the interaction of JUND with MAPK10 and the phosphorylation of JUND by MAP kinases MAPK8 and MAPK10. Interacts with KMT2A (via MBM motif). The KMT2A-MEN1 complex interacts with PSIP1 with a greater affinity as MEN1 enhances interaction of KMT2A with PSIP1. In terms of tissue distribution, widely expressed, including in the pituitary, brain, large intestine, spleen, kidney, adrenal gland, ovary, testis, thymus, lung, epididymis, bone marrow, pancreatic islets and placenta.

The protein localises to the nucleus. Its function is as follows. Essential component of a MLL/SET1 histone methyltransferase (HMT) complex, a complex that specifically methylates 'Lys-4' of histone H3 (H3K4). Functions as a transcriptional regulator. Binds to the TERT promoter and represses telomerase expression. Represses JUND-mediated transcriptional activation on AP1 sites, as well as that mediated by NFKB subunit RELA. Positively regulates HOXC8 and HOXC6 gene expression. May be involved in normal hematopoiesis through the activation of HOXA9 expression. May be involved in DNA repair. Plays a role in TGFB1-mediated inhibition of cell-proliferation, possibly regulating SMAD3 transcriptional activity. This is Menin (Men1) from Rattus norvegicus (Rat).